Consider the following 503-residue polypeptide: UDP-N-acetylmuramoylalanine--D-glutamate ligase (503 aa).

Residue 129 to 135 (GTNGKTT) coordinates ATP.

Belongs to the MurCDEF family.

The protein resides in the cytoplasm. It carries out the reaction UDP-N-acetyl-alpha-D-muramoyl-L-alanine + D-glutamate + ATP = UDP-N-acetyl-alpha-D-muramoyl-L-alanyl-D-glutamate + ADP + phosphate + H(+). It participates in cell wall biogenesis; peptidoglycan biosynthesis. Its function is as follows. Cell wall formation. Catalyzes the addition of glutamate to the nucleotide precursor UDP-N-acetylmuramoyl-L-alanine (UMA). The sequence is that of UDP-N-acetylmuramoylalanine--D-glutamate ligase from Burkholderia multivorans (strain ATCC 17616 / 249).